A 139-amino-acid polypeptide reads, in one-letter code: Small ribosomal subunit protein bS6 (139 aa).

Basic and acidic residues predominate over residues Ala-95 to Asp-121. The segment at Ala-95–Glu-139 is disordered. The span at Glu-124–Glu-139 shows a compositional bias: acidic residues.

The protein belongs to the bacterial ribosomal protein bS6 family.

Functionally, binds together with bS18 to 16S ribosomal RNA. This chain is Small ribosomal subunit protein bS6, found in Pseudomonas aeruginosa (strain LESB58).